A 224-amino-acid polypeptide reads, in one-letter code: Response regulator protein GraR (224 aa).

Positions 2 to 115 (QILLVEDDNT…VLIAKLQAIY (114 aa)) constitute a Response regulatory domain. Asp51 bears the 4-aspartylphosphate mark. Residues 126 to 224 (KRTLTWQDAV…KVGKGYMAHE (99 aa)) constitute a DNA-binding region (ompR/PhoB-type). Phosphothreonine occurs at positions 128, 130, and 149.

In terms of assembly, interacts with GraX. Phosphorylated by GraS. Phosphorylated by Stk1; phosphorylation increases the DNA-binding activity of GraR.

The protein localises to the cytoplasm. Its function is as follows. Member of the two-component regulatory system GraR/GraS involved in resistance against cationic antimicrobial peptides (CAMPs). Upon phosphorylation by GraS, functions as a transcription regulator by direct binding to promoter regions of target genes such as adhesins, exoproteins, transporters, toxins, and proteins involved in cell wall synthesis. Down-regulates the expression of many genes involved in RNA and amino acid synthesis or glycolysis. This is Response regulator protein GraR (graR) from Staphylococcus aureus (strain MRSA252).